Reading from the N-terminus, the 354-residue chain is S-adenosylmethionine:tRNA ribosyltransferase-isomerase (354 aa).

The protein belongs to the QueA family. In terms of assembly, monomer.

The protein localises to the cytoplasm. It carries out the reaction 7-aminomethyl-7-carbaguanosine(34) in tRNA + S-adenosyl-L-methionine = epoxyqueuosine(34) in tRNA + adenine + L-methionine + 2 H(+). Its pathway is tRNA modification; tRNA-queuosine biosynthesis. Its function is as follows. Transfers and isomerizes the ribose moiety from AdoMet to the 7-aminomethyl group of 7-deazaguanine (preQ1-tRNA) to give epoxyqueuosine (oQ-tRNA). The polypeptide is S-adenosylmethionine:tRNA ribosyltransferase-isomerase (Salmonella paratyphi A (strain ATCC 9150 / SARB42)).